A 349-amino-acid chain; its full sequence is Protein RecA (349 aa).

Residue 65 to 72 coordinates ATP; the sequence is GPESSGKT.

Belongs to the RecA family.

It localises to the cytoplasm. Can catalyze the hydrolysis of ATP in the presence of single-stranded DNA, the ATP-dependent uptake of single-stranded DNA by duplex DNA, and the ATP-dependent hybridization of homologous single-stranded DNAs. It interacts with LexA causing its activation and leading to its autocatalytic cleavage. The polypeptide is Protein RecA (Aliarcobacter butzleri (strain RM4018) (Arcobacter butzleri)).